Reading from the N-terminus, the 692-residue chain is FMR1-interacting protein NUFIP2 (692 aa).

A disordered region spans residues 1 to 100; the sequence is MEEKPGQPQP…KKTGYGEING (100 aa). Basic residues-rich tracts occupy residues 11-23 and 31-54; these read QHHH…HHHP and SHHH…HHQQ. A Glycyl lysine isopeptide (Lys-Gly) (interchain with G-Cter in SUMO2) cross-link involves residue lysine 79. Phosphothreonine is present on threonine 88. Lysine 110 participates in a covalent cross-link: Glycyl lysine isopeptide (Lys-Gly) (interchain with G-Cter in SUMO2). Residues serine 113 and serine 114 each carry the phosphoserine modification. Glycyl lysine isopeptide (Lys-Gly) (interchain with G-Cter in SUMO2) cross-links involve residues lysine 137, lysine 147, lysine 158, and lysine 172. The segment at 205–233 is disordered; the sequence is SKGADNDGSGSESGYTTPKKRKARRNSAK. Phosphoserine occurs at positions 213 and 215. Phosphotyrosine is present on tyrosine 219. Threonine 220 and threonine 221 each carry phosphothreonine. Residues 222 to 231 show a composition bias toward basic residues; it reads PKKRKARRNS. Residues lysine 262 and lysine 281 each participate in a glycyl lysine isopeptide (Lys-Gly) (interchain with G-Cter in SUMO2) cross-link. Disordered stretches follow at residues 277–337 and 369–401; these read KPIW…WTLF and TVQN…SQVP. Residue arginine 291 is modified to Omega-N-methylarginine. Residue lysine 293 forms a Glycyl lysine isopeptide (Lys-Gly) (interchain with G-Cter in SUMO2) linkage. The residue at position 304 (serine 304) is a Phosphoserine. Lysine 307 is covalently cross-linked (Glycyl lysine isopeptide (Lys-Gly) (interchain with G-Cter in SUMO2)). A compositionally biased stretch (low complexity) spans 371–395; sequence QNSSVSPSSSSSSSSTGETQTQSSS. Serine 376 is modified (phosphoserine). Threonine 569 is modified (phosphothreonine). Residues serine 570, serine 589, serine 605, and serine 626 each carry the phosphoserine modification. Threonine 630 is modified (phosphothreonine). A phosphoserine mark is found at serine 634, serine 649, serine 652, and serine 689.

Interacts with FMR1 (via N-terminus). Interacts with DDX6.

Its subcellular location is the nucleus. The protein resides in the cytoplasm. It localises to the stress granule. Its function is as follows. Binds RNA. The polypeptide is FMR1-interacting protein NUFIP2 (Nufip2) (Mus musculus (Mouse)).